Consider the following 281-residue polypeptide: Protein DOG1-like 1 (281 aa).

The 257-residue stretch at 9 to 265 (EKLQQDCYNE…HEWGKSREHR (257 aa)) folds into the DOG1 domain. The tract at residues 262-281 (REHRRLEASGGDSGGNVTRE) is disordered.

The protein is Protein DOG1-like 1 of Arabidopsis thaliana (Mouse-ear cress).